The sequence spans 141 residues: Transcription antitermination protein NusB (141 aa).

Belongs to the NusB family.

Its function is as follows. Involved in transcription antitermination. Required for transcription of ribosomal RNA (rRNA) genes. Binds specifically to the boxA antiterminator sequence of the ribosomal RNA (rrn) operons. This chain is Transcription antitermination protein NusB, found in Neisseria meningitidis serogroup A / serotype 4A (strain DSM 15465 / Z2491).